The chain runs to 361 residues: 3-dehydroquinate synthase (361 aa).

NAD(+) is bound by residues 107–111 (GVIGD), 131–132 (TS), Lys144, and Lys153. Residues Glu186, His251, and His268 each coordinate Zn(2+).

The protein belongs to the sugar phosphate cyclases superfamily. Dehydroquinate synthase family. Requires NAD(+) as cofactor. Co(2+) is required as a cofactor. The cofactor is Zn(2+).

It localises to the cytoplasm. The enzyme catalyses 7-phospho-2-dehydro-3-deoxy-D-arabino-heptonate = 3-dehydroquinate + phosphate. The protein operates within metabolic intermediate biosynthesis; chorismate biosynthesis; chorismate from D-erythrose 4-phosphate and phosphoenolpyruvate: step 2/7. Functionally, catalyzes the conversion of 3-deoxy-D-arabino-heptulosonate 7-phosphate (DAHP) to dehydroquinate (DHQ). The protein is 3-dehydroquinate synthase of Synechocystis sp. (strain ATCC 27184 / PCC 6803 / Kazusa).